The sequence spans 1029 residues: Beta-galactosidase (1029 aa).

Substrate-binding residues include N108 and D207. D207 contacts Na(+). E422, H424, and E467 together coordinate Mg(2+). Residues E467 and 543–546 (EYAH) each bind substrate. The Proton donor role is filled by E467. E543 (nucleophile) is an active-site residue. N603 lines the Mg(2+) pocket. Na(+) contacts are provided by F607 and N610. Positions 610 and 1005 each coordinate substrate.

It belongs to the glycosyl hydrolase 2 family. Homotetramer. Mg(2+) serves as cofactor. Na(+) is required as a cofactor.

It catalyses the reaction Hydrolysis of terminal non-reducing beta-D-galactose residues in beta-D-galactosides.. The chain is Beta-galactosidase from Escherichia coli.